Consider the following 308-residue polypeptide: Ankyrin repeat and SOCS box protein 12 (308 aa).

5 ANK repeats span residues 63 to 92, 96 to 125, 129 to 158, 171 to 200, and 213 to 243; these read IPGT…DVDS, KAQT…CPSG, NNCS…EANV, SCSG…DPDY, and QPRT…NIYL. An SOCS box domain is found at 268–308; the sequence is PRSLLSQTRLVIRRSLCRANQSQATDQLDIPPVLISYLKHQ.

Belongs to the ankyrin SOCS box (ASB) family. In terms of assembly, interacts with CUL5 and RNF7.

The protein operates within protein modification; protein ubiquitination. Its function is as follows. Probable substrate-recognition component of a SCF-like ECS (Elongin-Cullin-SOCS-box protein) E3 ubiquitin-protein ligase complex which mediates the ubiquitination and subsequent proteasomal degradation of target proteins. The polypeptide is Ankyrin repeat and SOCS box protein 12 (Asb12) (Mus musculus (Mouse)).